A 221-amino-acid polypeptide reads, in one-letter code: Cytidylate kinase (221 aa).

Residue 11-19 (GPTASGKGT) coordinates ATP.

It belongs to the cytidylate kinase family. Type 1 subfamily.

It is found in the cytoplasm. The enzyme catalyses CMP + ATP = CDP + ADP. It carries out the reaction dCMP + ATP = dCDP + ADP. The chain is Cytidylate kinase from Cupriavidus pinatubonensis (strain JMP 134 / LMG 1197) (Cupriavidus necator (strain JMP 134)).